We begin with the raw amino-acid sequence, 508 residues long: Photosystem II CP47 reaction center protein (508 aa).

6 helical membrane passes run 21–36 (AVHIMHTALVAGWAGS), 101–115 (ILFSGLCFLAAIWHW), 140–156 (GIHLFLSGLACFGFGAF), 203–218 (IAAGTLGILAGLFHLS), 237–252 (VLSSSIAAVFFAAFVV), and 457–472 (SFALLFFFGHIWHGAR).

This sequence belongs to the PsbB/PsbC family. PsbB subfamily. As to quaternary structure, PSII is composed of 1 copy each of membrane proteins PsbA, PsbB, PsbC, PsbD, PsbE, PsbF, PsbH, PsbI, PsbJ, PsbK, PsbL, PsbM, PsbT, PsbX, PsbY, PsbZ, Psb30/Ycf12, at least 3 peripheral proteins of the oxygen-evolving complex and a large number of cofactors. It forms dimeric complexes. Binds multiple chlorophylls. PSII binds additional chlorophylls, carotenoids and specific lipids. serves as cofactor.

The protein localises to the plastid. The protein resides in the chloroplast thylakoid membrane. One of the components of the core complex of photosystem II (PSII). It binds chlorophyll and helps catalyze the primary light-induced photochemical processes of PSII. PSII is a light-driven water:plastoquinone oxidoreductase, using light energy to abstract electrons from H(2)O, generating O(2) and a proton gradient subsequently used for ATP formation. This chain is Photosystem II CP47 reaction center protein, found in Oenothera biennis (German evening primrose).